The primary structure comprises 203 residues: E3 ubiquitin-protein ligase rnf152-B (203 aa).

The RING-type zinc finger occupies 12–55 (CQICFNYYSPRRRPKLLDCKHTCCSVCLQQMRASQKDLRCPWCR). A helical transmembrane segment spans residues 167–187 (SGVCTVILVACVLVFLLGIVL).

This sequence belongs to the RNF152 family.

It localises to the lysosome membrane. The catalysed reaction is S-ubiquitinyl-[E2 ubiquitin-conjugating enzyme]-L-cysteine + [acceptor protein]-L-lysine = [E2 ubiquitin-conjugating enzyme]-L-cysteine + N(6)-ubiquitinyl-[acceptor protein]-L-lysine.. It functions in the pathway protein modification; protein ubiquitination. E3 ubiquitin-protein ligase that acts as a negative regulator of mTORC1 signaling by mediating ubiquitination of RagA/RRAGA and RHEB. Catalyzes 'Lys-63'-linked polyubiquitination of RagA/RRAGA in response to amino acid starvation, thereby regulating mTORC1 signaling. Also mediates monoubiquitination of RHEB, promoting its association with the TSC-TBC complex and subsequent inhibition. Also mediates 'Lys-48'-linked polyubiquitination of target proteins and their subsequent targeting to the proteasome for degradation. The sequence is that of E3 ubiquitin-protein ligase rnf152-B from Xenopus laevis (African clawed frog).